Consider the following 249-residue polypeptide: 3-deoxy-manno-octulosonate cytidylyltransferase (249 aa).

This sequence belongs to the KdsB family.

The protein localises to the cytoplasm. The catalysed reaction is 3-deoxy-alpha-D-manno-oct-2-ulosonate + CTP = CMP-3-deoxy-beta-D-manno-octulosonate + diphosphate. It participates in nucleotide-sugar biosynthesis; CMP-3-deoxy-D-manno-octulosonate biosynthesis; CMP-3-deoxy-D-manno-octulosonate from 3-deoxy-D-manno-octulosonate and CTP: step 1/1. It functions in the pathway bacterial outer membrane biogenesis; lipopolysaccharide biosynthesis. Functionally, activates KDO (a required 8-carbon sugar) for incorporation into bacterial lipopolysaccharide in Gram-negative bacteria. This is 3-deoxy-manno-octulosonate cytidylyltransferase from Aliivibrio fischeri (strain ATCC 700601 / ES114) (Vibrio fischeri).